The primary structure comprises 207 residues: Large ribosomal subunit protein bL25 (207 aa).

The protein belongs to the bacterial ribosomal protein bL25 family. CTC subfamily. Part of the 50S ribosomal subunit; part of the 5S rRNA/L5/L18/L25 subcomplex. Contacts the 5S rRNA. Binds to the 5S rRNA independently of L5 and L18.

Its function is as follows. This is one of the proteins that binds to the 5S RNA in the ribosome where it forms part of the central protuberance. The protein is Large ribosomal subunit protein bL25 of Bordetella petrii (strain ATCC BAA-461 / DSM 12804 / CCUG 43448).